The primary structure comprises 1562 residues: Pikromycin polyketide synthase component PikAIII (1562 aa).

One can recognise a Ketosynthase family 3 (KS3) domain in the interval H34–E464. The segment at V37–H1475 is module 5. Residue C209 is the Acyl-thioester intermediate; for beta-ketoacyl synthase activity of the active site. Active-site for beta-ketoacyl synthase activity residues include H344 and H384. The interval F565–L866 is acyltransferase. S655 serves as the catalytic Acyl-ester intermediate; for acyltransferase activity. The segment at G1116–A1293 is beta-ketoacyl reductase. NADP(+) contacts are provided by residues T1124–L1127, S1147–G1150, D1176–V1177, K1226, and Y1248–S1249. Y1263 serves as the catalytic Acyl-ester intermediate; for beta-ketoacyl reductase activity. In terms of domain architecture, Carrier spans P1403–Y1478. Position 1438 is an O-(pantetheine 4'-phosphoryl)serine (S1438). The segment at G1519–D1548 is disordered. The segment covering G1532 to E1541 has biased composition (low complexity).

In terms of assembly, homodimer. Pikromycin PKS consists of a combination of multimodular (PikAI and PikAII) and monomodular (PikAIII and PikAIV) polypeptides each coding for a functional synthase subunit which participates in 1 (monomodular) or 2 (multimodular) of the six FAS-like elongation steps required for formation of the polyketide. Module 1, 2, 3, 4, 5, and 6 participating in biosynthesis steps 1, 2, 3, 4, 5, and 6, respectively. Pantetheine 4'-phosphate is required as a cofactor.

It carries out the reaction 5 (S)-methylmalonyl-CoA + malonyl-CoA + 5 NADPH + 11 H(+) = 10-deoxymethynolide + 6 CO2 + 5 NADP(+) + 6 CoA + 2 H2O. It catalyses the reaction 6 (S)-methylmalonyl-CoA + malonyl-CoA + 5 NADPH + 12 H(+) = narbonolide + 7 CO2 + 5 NADP(+) + 7 CoA + 2 H2O. It functions in the pathway antibiotic biosynthesis. In terms of biological role, involved in the biosynthesis of 12- and 14-membered ring macrolactone antibiotics such as methymycin and neomethymycin, and pikromycin and narbomycin, respectively. Component of the pikromycin PKS which catalyzes the biosynthesis of both precursors 10-deoxymethynolide (12-membered ring macrolactone) and narbonolide (14-membered ring macrolactone). Chain elongation through PikAI, PikAII and PikAIII followed by thioesterase catalyzed termination results in the production of 10-deoxymethynolide, while continued elongation through PikAIV, followed by thioesterase (TE) catalyzed cyclization results in the biosynthesis of the narbonolide. The protein is Pikromycin polyketide synthase component PikAIII of Streptomyces venezuelae.